The primary structure comprises 141 residues: Nucleoside diphosphate kinase (141 aa).

ATP-binding residues include lysine 11, phenylalanine 59, arginine 87, threonine 93, arginine 104, and asparagine 114. The active-site Pros-phosphohistidine intermediate is histidine 117.

This sequence belongs to the NDK family. As to quaternary structure, homotetramer. The cofactor is Mg(2+).

The protein resides in the cytoplasm. The enzyme catalyses a 2'-deoxyribonucleoside 5'-diphosphate + ATP = a 2'-deoxyribonucleoside 5'-triphosphate + ADP. It catalyses the reaction a ribonucleoside 5'-diphosphate + ATP = a ribonucleoside 5'-triphosphate + ADP. Its function is as follows. Major role in the synthesis of nucleoside triphosphates other than ATP. The ATP gamma phosphate is transferred to the NDP beta phosphate via a ping-pong mechanism, using a phosphorylated active-site intermediate. The protein is Nucleoside diphosphate kinase of Paracidovorax citrulli (strain AAC00-1) (Acidovorax citrulli).